The chain runs to 405 residues: Dematin (405 aa).

Disordered stretches follow at residues 1–29, 81–100, and 108–332; these read MERL…SPSS, SREC…PEVW, and IISQ…DRGN. Positions 11–29 are enriched in low complexity; the sequence is SPGSVSSSRDSSVPGSPSS. Phosphoserine occurs at positions 16, 18, 26, 92, 96, 110, and 113. Residues 113-124 show a composition bias toward low complexity; sequence STPRTTGTPRTS. T114 carries the post-translational modification Phosphothreonine. 2 positions are modified to phosphoserine: S156 and S226. The segment covering 216 to 228 has biased composition (acidic residues); sequence EEEEEEEDDDSEE. The tract at residues 224 to 308 is interaction with RASGRF2; the sequence is DDSEEEIKAI…SRLQSTEFSP (85 aa). 2 stretches are compositionally biased toward basic and acidic residues: residues 229–242 and 252–261; these read EIKA…EELS and ILKEEMEKSL. 8 positions are modified to phosphoserine: S269, S279, S289, S303, S315, S333, S372, and S383. The segment covering 277–292 has biased composition (low complexity); the sequence is HTSLHSGTSKSSSLPS. Positions 294-322 are enriched in polar residues; sequence GRTTLSRLQSTEFSPSGSEAGSPGLQNGE. Residues 337–405 form the HP domain; the sequence is VLEQKIYPYE…NELKKKASLF (69 aa). A Phosphoserine; by PKA modification is found at S403.

Belongs to the villin/gelsolin family. Monomeric (isoform 2); under reducing conditions. Self-associates. Exists under oxidizing condition as a trimer of two isoforms 2 and isoform 1 linked by disulfide bonds. Found in a complex with DMTN, F-actin and spectrin. Found in a complex with ADD2, DMTN and SLC2A1. Interacts with F-actin, ITPKB and spectrin. Isoform 2 interacts with SLC2A1 (via C-terminus cytoplasmic region). Interacts with RASGRF2. In terms of processing, phosphorylated. Phosphorylation at Ser-403 by PKA causes the C-terminal headpiece domain to associate with the N-terminal core domain, and leads to the inhibition of its actin bundling activity. In terms of tissue distribution, expressed in platelets. Isoform 1 and isoform 2 are expressed in mature erythrocytes (at protein level).

It localises to the cytoplasm. The protein resides in the cytosol. It is found in the perinuclear region. The protein localises to the cytoskeleton. Its subcellular location is the cell membrane. It localises to the membrane. The protein resides in the endomembrane system. It is found in the cell projection. Membrane-cytoskeleton-associated protein with F-actin-binding activity that induces F-actin bundles formation and stabilization. Its F-actin-bundling activity is reversibly regulated upon its phosphorylation by the cAMP-dependent protein kinase A (PKA). Binds to the erythrocyte membrane glucose transporter-1 SLC2A1/GLUT1, and hence stabilizes and attaches the spectrin-actin network to the erythrocytic plasma membrane. Plays a role in maintaining the functional integrity of PKA-activated erythrocyte shape and the membrane mechanical properties. Also plays a role as a modulator of actin dynamics in fibroblasts; acts as a negative regulator of the RhoA activation pathway. In platelets, functions as a regulator of internal calcium mobilization across the dense tubular system that affects platelet granule secretion pathways and aggregation. Also required for the formation of a diverse set of cell protrusions, such as filopodia and lamellipodia, necessary for platelet cell spreading, motility and migration. Acts as a tumor suppressor and inhibits malignant cell transformation. This Mus musculus (Mouse) protein is Dematin (Dmtn).